Reading from the N-terminus, the 119-residue chain is uncharacterized protein (119 aa).

This is an uncharacterized protein from Ureaplasma parvum serovar 3 (strain ATCC 700970).